A 304-amino-acid chain; its full sequence is Voltage-dependent anion channel-forming protein YneE (304 aa).

Helical transmembrane passes span Leu-28–Leu-48, Ile-50–Phe-70, Val-194–Leu-214, and Leu-220–Ile-240.

It belongs to the anion channel-forming bestrophin (TC 1.A.46) family.

The protein localises to the cell membrane. This Escherichia coli O157:H7 protein is Voltage-dependent anion channel-forming protein YneE (yneE).